Here is a 409-residue protein sequence, read N- to C-terminus: Major capsid protein (409 aa).

Belongs to the lambda phage major capsid protein family. Homomultimer. Interacts with the portal protein. Interacts with the decoration protein.

Its subcellular location is the virion. The protein resides in the host cytoplasm. In terms of biological role, assembles to form an icosahedric capsid shell with a T=7 symmetry although with a diameter of about 82 nm, which is a larger volume than the usual T=7 capsids. A dramatic reconfiguration of the capsid shell that expands the procaspid from a diameter of 66 nm to a supersized capsid of 82 nm, allows packaging of the large viral DNA genome. The capsid decoration protein binds the expanded capsid and stabilizes it. The protein is Major capsid protein of Thermus virus P23-45 (Thermus thermophilus phage P23-45).